Here is a 494-residue protein sequence, read N- to C-terminus: Alpha-amylase B (494 aa).

Residues 1–18 (MFLAKSIVCLALLAVANA) form the signal peptide. A Pyrrolidone carboxylic acid modification is found at Gln-19. Cys-46 and Cys-102 are joined by a disulfide. Asn-116, Arg-165, and Asp-174 together coordinate Ca(2+). Cys-153 and Cys-167 are joined by a disulfide. Residue Arg-202 coordinates chloride. Asp-204 serves as the catalytic Nucleophile. Residue His-208 participates in Ca(2+) binding. Glu-241 functions as the Proton donor in the catalytic mechanism. 2 residues coordinate chloride: Asn-304 and Arg-343. Intrachain disulfides connect Cys-376/Cys-382 and Cys-448/Cys-460.

Belongs to the glycosyl hydrolase 13 family. In terms of assembly, monomer. Ca(2+) is required as a cofactor. Chloride serves as cofactor.

The catalysed reaction is Endohydrolysis of (1-&gt;4)-alpha-D-glucosidic linkages in polysaccharides containing three or more (1-&gt;4)-alpha-linked D-glucose units.. The sequence is that of Alpha-amylase B (Amy-d) from Drosophila yakuba (Fruit fly).